Reading from the N-terminus, the 185-residue chain is Ribosome-recycling factor (185 aa).

The protein belongs to the RRF family.

It localises to the cytoplasm. Its function is as follows. Responsible for the release of ribosomes from messenger RNA at the termination of protein biosynthesis. May increase the efficiency of translation by recycling ribosomes from one round of translation to another. The chain is Ribosome-recycling factor from Pseudomonas putida (strain GB-1).